Here is a 200-residue protein sequence, read N- to C-terminus: LexA repressor (200 aa).

A DNA-binding region (H-T-H motif) is located at residues 28–48 (RAEIARILGFKSANAAEEHIK). Catalysis depends on for autocatalytic cleavage activity residues Ser-118 and Lys-155.

This sequence belongs to the peptidase S24 family. Homodimer.

It catalyses the reaction Hydrolysis of Ala-|-Gly bond in repressor LexA.. Functionally, represses a number of genes involved in the response to DNA damage (SOS response), including recA and lexA. In the presence of single-stranded DNA, RecA interacts with LexA causing an autocatalytic cleavage which disrupts the DNA-binding part of LexA, leading to derepression of the SOS regulon and eventually DNA repair. The chain is LexA repressor from Cellvibrio japonicus (strain Ueda107) (Pseudomonas fluorescens subsp. cellulosa).